A 323-amino-acid polypeptide reads, in one-letter code: ADP-L-glycero-D-manno-heptose-6-epimerase (323 aa).

NADP(+) is bound by residues 10 to 11 (FI), 31 to 32 (DN), Lys-38, Arg-53, 75 to 79 (MGACS), and Asn-92. The Proton acceptor role is filled by Tyr-143. Lys-147 contacts NADP(+). Position 170 (Asn-170) interacts with substrate. Residues Val-171 and Lys-179 each coordinate NADP(+). Lys-179 acts as the Proton acceptor in catalysis. Substrate-binding positions include Asp-181, Lys-188, 202 to 205 (FRSC), Arg-216, and Tyr-281.

Belongs to the NAD(P)-dependent epimerase/dehydratase family. HldD subfamily. In terms of assembly, homopentamer. NADP(+) is required as a cofactor.

The catalysed reaction is ADP-D-glycero-beta-D-manno-heptose = ADP-L-glycero-beta-D-manno-heptose. Its pathway is nucleotide-sugar biosynthesis; ADP-L-glycero-beta-D-manno-heptose biosynthesis; ADP-L-glycero-beta-D-manno-heptose from D-glycero-beta-D-manno-heptose 7-phosphate: step 4/4. Functionally, catalyzes the interconversion between ADP-D-glycero-beta-D-manno-heptose and ADP-L-glycero-beta-D-manno-heptose via an epimerization at carbon 6 of the heptose. This chain is ADP-L-glycero-D-manno-heptose-6-epimerase, found in Nitratidesulfovibrio vulgaris (strain ATCC 29579 / DSM 644 / CCUG 34227 / NCIMB 8303 / VKM B-1760 / Hildenborough) (Desulfovibrio vulgaris).